The sequence spans 191 residues: uncharacterized protein (191 aa).

The signal sequence occupies residues Met-1–Gly-17. Residues Thr-82–Ile-148 are disordered. A helical membrane pass occupies residues Val-168 to Glu-188.

Its subcellular location is the membrane. This is an uncharacterized protein from Saccharomyces cerevisiae (strain ATCC 204508 / S288c) (Baker's yeast).